Reading from the N-terminus, the 213-residue chain is Cell wall protein PGA62 (213 aa).

The first 18 residues, Met1–Ala18, serve as a signal peptide directing secretion. A glycan (N-linked (GlcNAc...) asparagine) is linked at Asn22. The interval Cys120–Gly194 is disordered. The segment covering Pro145–Lys172 has biased composition (polar residues). Over residues Thr173–Gly194 the composition is skewed to low complexity. Gly194 carries the GPI-anchor amidated glycine lipid modification. A propeptide spans Ala195–Phe213 (removed in mature form).

Belongs to the HWP1 family. N- and O-glycosylated. In terms of processing, the GPI-anchor is attached to the protein in the endoplasmic reticulum and serves to target the protein to the cell surface. There, the glucosamine-inositol phospholipid moiety is cleaved off and the GPI-modified mannoprotein is covalently attached via its lipidless GPI glycan remnant to the 1,6-beta-glucan of the outer cell wall layer.

Its subcellular location is the secreted. It is found in the cell wall. The protein resides in the membrane. Functionally, cell wall protein necessary for cell wall integrity. Plays only a minor role in hyphal morphogenesis and is not critical to biofilm formation. The sequence is that of Cell wall protein PGA62 (PGA62) from Candida albicans (strain SC5314 / ATCC MYA-2876) (Yeast).